We begin with the raw amino-acid sequence, 429 residues long: Homocysteine synthase (429 aa).

K210 carries the post-translational modification N6-(pyridoxal phosphate)lysine.

It belongs to the trans-sulfuration enzymes family. In terms of assembly, homotetramer. Pyridoxal 5'-phosphate serves as cofactor.

The protein localises to the cytoplasm. It is found in the nucleus. It carries out the reaction O-acetyl-L-homoserine + methanethiol = L-methionine + acetate + H(+). The catalysed reaction is O-acetyl-L-homoserine + hydrogen sulfide = L-homocysteine + acetate. The protein operates within amino-acid biosynthesis; L-methionine biosynthesis via de novo pathway; L-homocysteine from O-acetyl-L-homoserine. In terms of biological role, catalyzes the conversion of O-acetyl-L-homoserine (OAH) into homocysteine in the methionine biosynthesis pathway. Can also use O-succinyl-L-homoserine and L-homoserine as substrates. Also has cysteine synthase (O-acetylserine sulfhydrylase) activity in vitro, but in S.pombe, it seems only to be involved in the alternative pathway of methionine biosynthesis under cysteine deficiency conditions. The protein is Homocysteine synthase of Schizosaccharomyces pombe (strain 972 / ATCC 24843) (Fission yeast).